The primary structure comprises 244 residues: MAYDIISDIHGCYDEMTALIQKLGYTIKNGVPVHEEGRVLVFAGDLTDRGPKSIEVIRFVAGAYEKGAVRYVPGNHCNKLYRYLKGNPVKVMHGLETTAAELEELSKDEKKSVSEQFMKLYETAPLYDILHNGELVVAHAGIRADDIGKYTRRVKDFVLYGDVTGETYPDGRPIRRDWAAAYNGKAWVVYGHTPVKEPRKVNRTINIDTGCVFGNQLTGFRFPEIETVSVPSSLPYDESRFRPI.

Belongs to the PrpE family. Requires Ni(2+) as cofactor.

The protein resides in the forespore. The catalysed reaction is P(1),P(4)-bis(5'-guanosyl) tetraphosphate + H2O = GMP + GTP + 2 H(+). With respect to regulation, inhibited by EDTA. Asymmetrically hydrolyzes Ap4p to yield AMP and ATP. Does not hydrolyze Ap2a or Ap6A. Also has an ATPase activity. Was shown to dephosphorylate phosphotyrosine but not phosphoserine or phosphothreonine from phosphorylated peptides. Involved in spore germination by controlling expression of genes coding for GerA and GerK receptors. The sequence is that of Bis(5'-nucleosyl)-tetraphosphatase PrpE [asymmetrical] (prpE) from Bacillus subtilis (strain 168).